The sequence spans 283 residues: 1D-myo-inositol 2-acetamido-2-deoxy-alpha-D-glucopyranoside deacetylase (283 aa).

Residues His15, Asp18, and His150 each contribute to the Zn(2+) site.

This sequence belongs to the MshB deacetylase family. The cofactor is Zn(2+).

The enzyme catalyses 1D-myo-inositol 2-acetamido-2-deoxy-alpha-D-glucopyranoside + H2O = 1D-myo-inositol 2-amino-2-deoxy-alpha-D-glucopyranoside + acetate. Its function is as follows. Catalyzes the deacetylation of 1D-myo-inositol 2-acetamido-2-deoxy-alpha-D-glucopyranoside (GlcNAc-Ins) in the mycothiol biosynthesis pathway. The protein is 1D-myo-inositol 2-acetamido-2-deoxy-alpha-D-glucopyranoside deacetylase of Actinosynnema mirum (strain ATCC 29888 / DSM 43827 / JCM 3225 / NBRC 14064 / NCIMB 13271 / NRRL B-12336 / IMRU 3971 / 101).